We begin with the raw amino-acid sequence, 620 residues long: Chaperone protein HscA homolog (620 aa).

Belongs to the heat shock protein 70 family.

Functionally, chaperone involved in the maturation of iron-sulfur cluster-containing proteins. Has a low intrinsic ATPase activity which is markedly stimulated by HscB. In Shewanella sp. (strain MR-4), this protein is Chaperone protein HscA homolog.